We begin with the raw amino-acid sequence, 236 residues long: tRNA (guanine-N(1)-)-methyltransferase (236 aa).

S-adenosyl-L-methionine is bound by residues glycine 116 and 136-141 (LGDFVL).

The protein belongs to the RNA methyltransferase TrmD family. Homodimer.

Its subcellular location is the cytoplasm. It catalyses the reaction guanosine(37) in tRNA + S-adenosyl-L-methionine = N(1)-methylguanosine(37) in tRNA + S-adenosyl-L-homocysteine + H(+). Its function is as follows. Specifically methylates guanosine-37 in various tRNAs. The protein is tRNA (guanine-N(1)-)-methyltransferase of Thiobacillus denitrificans (strain ATCC 25259 / T1).